Here is a 224-residue protein sequence, read N- to C-terminus: MNIEVGNISYTGAIISWSSSEPCLEDYYHIMYRPNWNSIFSGYLRYSFHHEEKVPRTISSVVLEHLAPSTLYFLCISCKKAAFPYRHYCTMFHTLDKSPLAPGSSLVDPQISLWVLMAILLACFTAVLAFICLQFWCVRCHEPRWSYRAGHMEEANGLVRWPEEAPDLGQREEDLQGLPLVEMPRKNSRDGAELDPEANQDAPDAGALQRGGGDPPAILPHCGE.

Positions 1–101 (MNIEVGNISY…FHTLDKSPLA (101 aa)) constitute a Fibronectin type-III domain. A helical membrane pass occupies residues 113–133 (LWVLMAILLACFTAVLAFICL). Residues 175 to 224 (LQGLPLVEMPRKNSRDGAELDPEANQDAPDAGALQRGGGDPPAILPHCGE) are disordered. The segment covering 183 to 192 (MPRKNSRDGA) has biased composition (basic and acidic residues).

Its subcellular location is the membrane. This Homo sapiens (Human) protein is Fibronectin type III domain-containing protein 9 (FNDC9).